The following is an 88-amino-acid chain: RNA-binding protein Hfq (88 aa).

The 60-residue stretch at 9-68 folds into the Sm domain; it reads DPFLNALRRERIPVSIYLVNGIKLQGQIESFDQFVILLKNTVNQMVYKHAISTVVPARAV. Positions 66–88 are disordered; that stretch reads RAVSHHSGEQQRAPSDRPEKTED. Over residues 71–88 the composition is skewed to basic and acidic residues; that stretch reads HSGEQQRAPSDRPEKTED.

This sequence belongs to the Hfq family. In terms of assembly, homohexamer.

In terms of biological role, RNA chaperone that binds small regulatory RNA (sRNAs) and mRNAs to facilitate mRNA translational regulation in response to envelope stress, environmental stress and changes in metabolite concentrations. Also binds with high specificity to tRNAs. In Vibrio atlanticus (strain LGP32) (Vibrio splendidus (strain Mel32)), this protein is RNA-binding protein Hfq.